We begin with the raw amino-acid sequence, 328 residues long: Fructosamine deglycase FrlB (328 aa).

SIS domains follow at residues 15–153 (FLQD…VLEN) and 181–311 (NAKQ…ELAE).

As to quaternary structure, homooctamer.

Catalyzes the conversion of a range of fructosamine 6-phosphates to glucose 6-phosphate and a free amino acid. The polypeptide is Fructosamine deglycase FrlB (frlB) (Bacillus subtilis (strain 168)).